Reading from the N-terminus, the 240-residue chain is Terpene cyclase cdmG (240 aa).

6 helical membrane passes run Tyr16 to Gly36, Tyr48 to Ile68, Ile78 to Ala98, Ile112 to Ala132, Val134 to Gly154, and Gly167 to Val187. An N-linked (GlcNAc...) asparagine glycan is attached at Asn197. The helical transmembrane segment at Ile205–Trp225 threads the bilayer.

This sequence belongs to the paxB family.

It is found in the membrane. The enzyme catalyses verruculide C epoxide = 3-hydroxypentacecilide A. It participates in secondary metabolite biosynthesis; terpenoid biosynthesis. Terpene cyclase; part of the gene cluster that mediates the biosynthesis of chrodrimanin B, a meroterpenoid that acts as a potent blocker of insect GABA-gated chloride channels. The first step of the pathway is the biosynthesis of 6-hydroxymellein by the polyketide synthase cdmE. The prenyltransferase cdmH acts as a 6-hydroxymellein 5-farnesyltransferase and produces the hydrophobic metabolite verruculide C. The FAD-dependent monooxygenase cdmI further converts verruculide C into verruculide B. The terpene cyclase cdmG then produced the pentacyclic molecule 3-hydroxypentacecilide A, the backbone structure of chrodrimanin B, via folding the farnesyl moiety of the substrate into the chair-boat conformation. The short-chain dehydrogenase/reductase cdmF functions as the 3-OH dehydrogenase that oxidizes the C-3 hydroxyl group of 3-hydroxypentacecilide A and produces chrodrimanin C, the dehydrogenated product of 3-hydroxypentacecilide A. The cytochrome P450 monooxygenase cdmJ then accepts both 3-hydroxypentacecilide A and chrodrimanin C and functions as a C-7-beta-hydroxylase to produce respectively chrodrimanin H and chrodrimanin F. The dioxygenase cdmA accepts chrodrimanin H to afford chrodrimanin E, which is further transformed to chrodrimanin A by the dioxygenase cdmD. CdmA can also accept chrodrimanin C as substrate to convert it into verruculide A, which is further converted into chrodrimanin T by cdmD. The last step of the biosynthesis is proposed to be performed by the acetyltransferase cdmC which acetylates chrodrimanin A to yield chrodrimanin B. The pathway may also lead to the production of additional shunt products, including chrodrimanins T and U. In Talaromyces verruculosus (Penicillium verruculosum), this protein is Terpene cyclase cdmG.